Here is a 466-residue protein sequence, read N- to C-terminus: Glutamate--tRNA ligase (466 aa).

Residues 10–20 (PSPTGFLHIGG) carry the 'HIGH' region motif. A 'KMSKS' region motif is present at residues 252–256 (KLSKR). Residue Lys-255 coordinates ATP.

This sequence belongs to the class-I aminoacyl-tRNA synthetase family. Glutamate--tRNA ligase type 1 subfamily. Monomer.

The protein localises to the cytoplasm. It catalyses the reaction tRNA(Glu) + L-glutamate + ATP = L-glutamyl-tRNA(Glu) + AMP + diphosphate. Functionally, catalyzes the attachment of glutamate to tRNA(Glu) in a two-step reaction: glutamate is first activated by ATP to form Glu-AMP and then transferred to the acceptor end of tRNA(Glu). The chain is Glutamate--tRNA ligase from Mycoplasmopsis synoviae (strain 53) (Mycoplasma synoviae).